We begin with the raw amino-acid sequence, 199 residues long: Thymidylate kinase (199 aa).

7–14 (GTEGVGKT) contacts ATP.

Belongs to the thymidylate kinase family.

It catalyses the reaction dTMP + ATP = dTDP + ADP. In terms of biological role, phosphorylation of dTMP to form dTDP in both de novo and salvage pathways of dTTP synthesis. This is Thymidylate kinase from Acinetobacter baumannii (strain ACICU).